The sequence spans 456 residues: Bifunctional protein GlmU (456 aa).

The segment at 1–229 (MSNSAMSVVI…LSEVEGVNNR (229 aa)) is pyrophosphorylase. Residues 11–14 (LAAG), K25, Q76, 81–82 (GT), 103–105 (YGD), G140, E154, N169, and N227 each bind UDP-N-acetyl-alpha-D-glucosamine. A Mg(2+)-binding site is contributed by D105. N227 contacts Mg(2+). Residues 230 to 250 (LQLSALERVYQREQADRLLLA) are linker. The segment at 251–456 (GVMLLDPARF…SGWQRPVKKK (206 aa)) is N-acetyltransferase. UDP-N-acetyl-alpha-D-glucosamine-binding residues include R333 and K351. H363 functions as the Proton acceptor in the catalytic mechanism. The UDP-N-acetyl-alpha-D-glucosamine site is built by Y366 and N377. Residues A380, 386–387 (NY), S405, A423, and R440 each bind acetyl-CoA.

This sequence in the N-terminal section; belongs to the N-acetylglucosamine-1-phosphate uridyltransferase family. The protein in the C-terminal section; belongs to the transferase hexapeptide repeat family. In terms of assembly, homotrimer. Mg(2+) serves as cofactor.

Its subcellular location is the cytoplasm. The enzyme catalyses alpha-D-glucosamine 1-phosphate + acetyl-CoA = N-acetyl-alpha-D-glucosamine 1-phosphate + CoA + H(+). It catalyses the reaction N-acetyl-alpha-D-glucosamine 1-phosphate + UTP + H(+) = UDP-N-acetyl-alpha-D-glucosamine + diphosphate. The protein operates within nucleotide-sugar biosynthesis; UDP-N-acetyl-alpha-D-glucosamine biosynthesis; N-acetyl-alpha-D-glucosamine 1-phosphate from alpha-D-glucosamine 6-phosphate (route II): step 2/2. It participates in nucleotide-sugar biosynthesis; UDP-N-acetyl-alpha-D-glucosamine biosynthesis; UDP-N-acetyl-alpha-D-glucosamine from N-acetyl-alpha-D-glucosamine 1-phosphate: step 1/1. Its pathway is bacterial outer membrane biogenesis; LPS lipid A biosynthesis. Its function is as follows. Catalyzes the last two sequential reactions in the de novo biosynthetic pathway for UDP-N-acetylglucosamine (UDP-GlcNAc). The C-terminal domain catalyzes the transfer of acetyl group from acetyl coenzyme A to glucosamine-1-phosphate (GlcN-1-P) to produce N-acetylglucosamine-1-phosphate (GlcNAc-1-P), which is converted into UDP-GlcNAc by the transfer of uridine 5-monophosphate (from uridine 5-triphosphate), a reaction catalyzed by the N-terminal domain. The protein is Bifunctional protein GlmU of Pectobacterium carotovorum subsp. carotovorum (strain PC1).